The following is a 412-amino-acid chain: Phosphatidylinositol 3,4,5-trisphosphate 3-phosphatase and protein-tyrosine-phosphatase PTEN1 (412 aa).

A Phosphatase tensin-type domain is found at 42 to 211 (RRLIIGGYDL…KYWSDLLSFS (170 aa)). The Phosphocysteine intermediate role is filled by Cys-152. The region spanning 239 to 396 (VDSVFFVVSE…FSLELLFGPA (158 aa)) is the C2 tensin-type domain.

The protein belongs to the PTEN phosphatase protein family. Expressed exclusively in pollen grains during the late stage of development (at protein level).

It catalyses the reaction O-phospho-L-tyrosyl-[protein] + H2O = L-tyrosyl-[protein] + phosphate. The catalysed reaction is a 1,2-diacyl-sn-glycero-3-phospho-(1D-myo-inositol-3,4,5-trisphosphate) + H2O = a 1,2-diacyl-sn-glycero-3-phospho-(1D-myo-inositol-4,5-bisphosphate) + phosphate. With respect to regulation, inhibited by vanadate. Functionally, protein tyrosine phosphatase that also exhibits lipid phosphatase activity. Can use phosphatidylinositol substrates such as PtdIns(3,4,5)P(3) as substrate. Pollen-specific phosphatase required for pollen development. This Arabidopsis thaliana (Mouse-ear cress) protein is Phosphatidylinositol 3,4,5-trisphosphate 3-phosphatase and protein-tyrosine-phosphatase PTEN1.